The chain runs to 252 residues: MGNKNIKPSKENRLSILSKDKMDSFKRGSWATSSFREKSRATIQRFSSLRREHIKVDHPDKFLELKRGIYKIIQKSSSIDVDKRTKLMSNIKTMMINPFMIEGLMTSLENLDPDNKMSYSSVMILGEFDIINISDNEAAFEFINSLLKSLLLLNTRQLKLLEYSISNDLLYAHINALEYIIKNTFNVPERQLILRGQYLTPIFSDLLKYAGLTIKSNILMWNKQFIKPVSDLYTSMRLLHCVTESYKVIGMG.

The protein belongs to the orthopoxvirus A47 protein family.

This is Protein A47 from Vaccinia virus (strain Western Reserve) (VACV).